The chain runs to 409 residues: NADH-quinone oxidoreductase subunit D (409 aa).

The protein belongs to the complex I 49 kDa subunit family. As to quaternary structure, NDH-1 is composed of 14 different subunits. Subunits NuoB, C, D, E, F, and G constitute the peripheral sector of the complex.

It is found in the cell inner membrane. The catalysed reaction is a quinone + NADH + 5 H(+)(in) = a quinol + NAD(+) + 4 H(+)(out). Functionally, NDH-1 shuttles electrons from NADH, via FMN and iron-sulfur (Fe-S) centers, to quinones in the respiratory chain. The immediate electron acceptor for the enzyme in this species is believed to be ubiquinone. Couples the redox reaction to proton translocation (for every two electrons transferred, four hydrogen ions are translocated across the cytoplasmic membrane), and thus conserves the redox energy in a proton gradient. The chain is NADH-quinone oxidoreductase subunit D from Helicobacter pylori (strain G27).